Reading from the N-terminus, the 348-residue chain is Dihydroorotate dehydrogenase (quinone) (348 aa).

FMN is bound by residues 60-64 and threonine 84; that span reads AGLDK. Lysine 64 is a binding site for substrate. Residue 109 to 113 participates in substrate binding; that stretch reads NRMGF. The FMN site is built by asparagine 137 and asparagine 170. Asparagine 170 contributes to the substrate binding site. Residue serine 173 is the Nucleophile of the active site. Asparagine 175 contacts substrate. Lysine 215 and threonine 243 together coordinate FMN. 244–245 is a substrate binding site; sequence NT. Residues glycine 266, glycine 295, and 316-317 contribute to the FMN site; that span reads YS.

Belongs to the dihydroorotate dehydrogenase family. Type 2 subfamily. As to quaternary structure, monomer. The cofactor is FMN.

Its subcellular location is the cell membrane. It carries out the reaction (S)-dihydroorotate + a quinone = orotate + a quinol. The protein operates within pyrimidine metabolism; UMP biosynthesis via de novo pathway; orotate from (S)-dihydroorotate (quinone route): step 1/1. Catalyzes the conversion of dihydroorotate to orotate with quinone as electron acceptor. This Nitrosospira multiformis (strain ATCC 25196 / NCIMB 11849 / C 71) protein is Dihydroorotate dehydrogenase (quinone).